We begin with the raw amino-acid sequence, 492 residues long: Probable cytochrome P450 513A3 (492 aa).

Residues 1–21 traverse the membrane as a helical segment; that stretch reads MTSLTLYLIIFSIILYLFVNR. Cys-437 serves as a coordination point for heme.

The protein belongs to the cytochrome P450 family. Requires heme as cofactor.

The protein resides in the membrane. This is Probable cytochrome P450 513A3 (cyp513A3) from Dictyostelium discoideum (Social amoeba).